The chain runs to 477 residues: Glutamyl-tRNA reductase (477 aa).

Substrate-binding positions include 49 to 52 (TCNR), Ser-109, 114 to 116 (EQQ), and Gln-120. Cys-50 serves as the catalytic Nucleophile. 189–194 (GAGAMG) contributes to the NADP(+) binding site.

Belongs to the glutamyl-tRNA reductase family. Homodimer.

The catalysed reaction is (S)-4-amino-5-oxopentanoate + tRNA(Glu) + NADP(+) = L-glutamyl-tRNA(Glu) + NADPH + H(+). Its pathway is porphyrin-containing compound metabolism; protoporphyrin-IX biosynthesis; 5-aminolevulinate from L-glutamyl-tRNA(Glu): step 1/2. Catalyzes the NADPH-dependent reduction of glutamyl-tRNA(Glu) to glutamate 1-semialdehyde (GSA). The protein is Glutamyl-tRNA reductase of Nocardia farcinica (strain IFM 10152).